Reading from the N-terminus, the 133-residue chain is Large-conductance mechanosensitive channel (133 aa).

2 helical membrane-spanning segments follow: residues 10 to 30 (FAVK…AAFG) and 76 to 96 (GIFV…FLVV).

It belongs to the MscL family. Homopentamer.

Its subcellular location is the cell inner membrane. In terms of biological role, channel that opens in response to stretch forces in the membrane lipid bilayer. May participate in the regulation of osmotic pressure changes within the cell. This Chlorobium phaeobacteroides (strain BS1) protein is Large-conductance mechanosensitive channel.